The sequence spans 601 residues: Terpinolene synthase, chloroplastic (601 aa).

Residues 1–32 (MSTFVISNSMHVGISFSFLHKLPQTPPPQVVC) constitute a chloroplast transit peptide. Residues D354, D358, D498, T502, and E506 each contribute to the Mg(2+) site. The DDXXD motif signature appears at 354–358 (DDVYD).

Belongs to the terpene synthase family. Tpsd subfamily. The cofactor is Mg(2+). Requires Mn(2+) as cofactor.

The protein resides in the plastid. It localises to the chloroplast. It carries out the reaction (2E)-geranyl diphosphate = terpinolene + diphosphate. It functions in the pathway secondary metabolite biosynthesis; terpenoid biosynthesis. Its function is as follows. Monoterpene synthase that catalyzes the formation of terpinolene and other monoterpenes from geranyl diphosphate. The polypeptide is Terpinolene synthase, chloroplastic (TES) (Ocimum basilicum (Sweet basil)).